The following is a 441-amino-acid chain: Putative F-box protein At1g33530 (441 aa).

Residues 91–137 form the F-box domain; that stretch reads TTLAVELPDVLVEEILQRLPVKYLVRLKSISKGWKSLIESDHLAEKH.

The protein is Putative F-box protein At1g33530 of Arabidopsis thaliana (Mouse-ear cress).